The following is a 240-amino-acid chain: 1-(5-phosphoribosyl)-5-[(5-phosphoribosylamino)methylideneamino] imidazole-4-carboxamide isomerase (240 aa).

Residue Asp8 is the Proton acceptor of the active site. Asp129 acts as the Proton donor in catalysis.

It belongs to the HisA/HisF family.

The protein localises to the cytoplasm. The enzyme catalyses 1-(5-phospho-beta-D-ribosyl)-5-[(5-phospho-beta-D-ribosylamino)methylideneamino]imidazole-4-carboxamide = 5-[(5-phospho-1-deoxy-D-ribulos-1-ylimino)methylamino]-1-(5-phospho-beta-D-ribosyl)imidazole-4-carboxamide. The protein operates within amino-acid biosynthesis; L-histidine biosynthesis; L-histidine from 5-phospho-alpha-D-ribose 1-diphosphate: step 4/9. The chain is 1-(5-phosphoribosyl)-5-[(5-phosphoribosylamino)methylideneamino] imidazole-4-carboxamide isomerase from Oceanobacillus iheyensis (strain DSM 14371 / CIP 107618 / JCM 11309 / KCTC 3954 / HTE831).